Reading from the N-terminus, the 45-residue chain is Photosystem II reaction center protein K (45 aa).

Positions 1-8 (MEGILFLA) are excised as a propeptide. A helical membrane pass occupies residues 24 to 44 (APVIPVFFLLLAFVWQAAVGF).

The protein belongs to the PsbK family. In terms of assembly, PSII is composed of 1 copy each of membrane proteins PsbA, PsbB, PsbC, PsbD, PsbE, PsbF, PsbH, PsbI, PsbJ, PsbK, PsbL, PsbM, PsbT, PsbX, PsbY, PsbZ, Psb30/Ycf12, at least 3 peripheral proteins of the oxygen-evolving complex and a large number of cofactors. It forms dimeric complexes.

The protein localises to the plastid. Its subcellular location is the chloroplast thylakoid membrane. Functionally, one of the components of the core complex of photosystem II (PSII). PSII is a light-driven water:plastoquinone oxidoreductase that uses light energy to abstract electrons from H(2)O, generating O(2) and a proton gradient subsequently used for ATP formation. It consists of a core antenna complex that captures photons, and an electron transfer chain that converts photonic excitation into a charge separation. This chain is Photosystem II reaction center protein K, found in Guillardia theta (Cryptophyte).